A 988-amino-acid polypeptide reads, in one-letter code: DExH-box ATP-dependent RNA helicase DExH9 (988 aa).

Residues Met1–Ser27 are disordered. A Helicase ATP-binding domain is found at Ile76–Cys232. Ala89–Thr96 provides a ligand contact to ATP. The DEVH box motif lies at Asp180–His183. The Helicase C-terminal domain occupies Asp307 to Arg509.

The protein belongs to the DExH box helicase family. SKI2 subfamily. Ubiquitous but preferentially expressed in active tissues.

Its subcellular location is the nucleus. The protein localises to the nucleolus. The catalysed reaction is ATP + H2O = ADP + phosphate + H(+). Its function is as follows. ATP-dependent RNA helicase that associates with the RNA exosome complex. Required for proper rRNA biogenesis and development. Involved in the 3'-processing of the 7S pre-RNA to the mature 5.8S rRNA and also in the removal of rRNA maturation by-products. The sequence is that of DExH-box ATP-dependent RNA helicase DExH9 from Arabidopsis thaliana (Mouse-ear cress).